A 386-amino-acid polypeptide reads, in one-letter code: Succinate--CoA ligase [ADP-forming] subunit beta (386 aa).

Residues lysine 46, 53–55 (GRG), glutamate 99, glutamine 102, and glutamate 107 contribute to the ATP site. Asparagine 199 and aspartate 213 together coordinate Mg(2+). Residues asparagine 264 and 321-323 (GIV) contribute to the substrate site.

It belongs to the succinate/malate CoA ligase beta subunit family. As to quaternary structure, heterotetramer of two alpha and two beta subunits. It depends on Mg(2+) as a cofactor.

It catalyses the reaction succinate + ATP + CoA = succinyl-CoA + ADP + phosphate. It carries out the reaction GTP + succinate + CoA = succinyl-CoA + GDP + phosphate. The protein operates within carbohydrate metabolism; tricarboxylic acid cycle; succinate from succinyl-CoA (ligase route): step 1/1. Succinyl-CoA synthetase functions in the citric acid cycle (TCA), coupling the hydrolysis of succinyl-CoA to the synthesis of either ATP or GTP and thus represents the only step of substrate-level phosphorylation in the TCA. The beta subunit provides nucleotide specificity of the enzyme and binds the substrate succinate, while the binding sites for coenzyme A and phosphate are found in the alpha subunit. The protein is Succinate--CoA ligase [ADP-forming] subunit beta of Ruthia magnifica subsp. Calyptogena magnifica.